The primary structure comprises 217 residues: Ribonuclease T (217 aa).

The region spanning 20–195 (VVVDVETAGF…YDTEKTAELF (176 aa)) is the Exonuclease domain. 4 residues coordinate Mg(2+): D23, E25, H182, and D187. The Proton donor/acceptor role is filled by H182.

This sequence belongs to the RNase T family. As to quaternary structure, homodimer. Requires Mg(2+) as cofactor.

Its function is as follows. Trims short 3' overhangs of a variety of RNA species, leaving a one or two nucleotide 3' overhang. Responsible for the end-turnover of tRNA: specifically removes the terminal AMP residue from uncharged tRNA (tRNA-C-C-A). Also appears to be involved in tRNA biosynthesis. This chain is Ribonuclease T, found in Vibrio vulnificus (strain CMCP6).